The chain runs to 833 residues: MAEQDQSRVKEINISQEMKTSFMDYAMSVIVSRALPDVRDGMKPVHRRILYAMNELGMTSDKAYKKSARIVGEVIGKYHPHGDSAVYETMVRMAQDFSYRYMLVDGHGNFGSIDGDAAAAMRYTEARMSKISMELVRDINKDTIDYQDNYDGSEKEPVVMPSRFPNLLVNGASGIAVGMATNIPPHQLGEVIDGVLALSKNPDISVPELMEHIPGPDFPTGAEILGRSGIRKAYQTGRGSITLRAKTEIEEHHGKQRIIVHEIPYQVNKAKLIEKIAELVRDKKIDGITDLRDESDRNGMRIVIEVRKDANANVLLNNLYKQTALQTSFGINLLALVEGQPKVLNLKECLEHYLAHQVIVIRRRTAFELRKAEARAHILEGLRIALDHLDEVISLIRSSQTTEIARNGLMERFELSYEQAQAILDMRLQRLTGLERDKIEAEYKELIERIAELKAILADHEKVLDIIREELLELKEKYNDERKTAISASEDMFEDEDLIPRQNVVITLTHHGYIKRLPISTYRSQKRGGRGIQGMGTNEDDFVQHLFTTNSHHTILFFTNKGKVYRLKGYEIPELGRTAKGIPIINLLQIEQDEYISTIIPIEEFTEDHYLFFMTKDGIAKRTQLSSFANIRRGGLFAINLREGDELHGVRLTNGDKEVIVGTRQGMAIRFHETDVRLMGRTATGVKGISLTGDDHVVGMDIVEDGQDVLIVTEKGFGKRTPIADYRIQTRGGKGIKTCNITEKNGPLVSLKVVSVDHDLMIITASGIIIRLHVKDISVTGRITQGVTLIRVAEGEEVATVARVDIEDDELDEDESIEEERDDRSEVEQGENE.

The Topo IIA-type catalytic domain maps to 35–498 (LPDVRDGMKP…SEDMFEDEDL (464 aa)). Tyr123 serves as the catalytic O-(5'-phospho-DNA)-tyrosine intermediate. Residues 525-531 (QKRGGRG) carry the GyrA-box motif. The interval 803–833 (RVDIEDDELDEDESIEEERDDRSEVEQGENE) is disordered. Positions 806–821 (IEDDELDEDESIEEER) are enriched in acidic residues.

Belongs to the type II topoisomerase GyrA/ParC subunit family. As to quaternary structure, heterotetramer, composed of two GyrA and two GyrB chains. In the heterotetramer, GyrA contains the active site tyrosine that forms a transient covalent intermediate with DNA, while GyrB binds cofactors and catalyzes ATP hydrolysis.

It is found in the cytoplasm. The catalysed reaction is ATP-dependent breakage, passage and rejoining of double-stranded DNA.. In terms of biological role, a type II topoisomerase that negatively supercoils closed circular double-stranded (ds) DNA in an ATP-dependent manner to modulate DNA topology and maintain chromosomes in an underwound state. Negative supercoiling favors strand separation, and DNA replication, transcription, recombination and repair, all of which involve strand separation. Also able to catalyze the interconversion of other topological isomers of dsDNA rings, including catenanes and knotted rings. Type II topoisomerases break and join 2 DNA strands simultaneously in an ATP-dependent manner. The polypeptide is DNA gyrase subunit A (Halalkalibacterium halodurans (strain ATCC BAA-125 / DSM 18197 / FERM 7344 / JCM 9153 / C-125) (Bacillus halodurans)).